A 155-amino-acid chain; its full sequence is Ribosomal RNA large subunit methyltransferase H (155 aa).

Residues leucine 72, glycine 103, and 122-127 (LSALTL) contribute to the S-adenosyl-L-methionine site.

This sequence belongs to the RNA methyltransferase RlmH family. Homodimer.

It is found in the cytoplasm. The catalysed reaction is pseudouridine(1915) in 23S rRNA + S-adenosyl-L-methionine = N(3)-methylpseudouridine(1915) in 23S rRNA + S-adenosyl-L-homocysteine + H(+). Specifically methylates the pseudouridine at position 1915 (m3Psi1915) in 23S rRNA. The chain is Ribosomal RNA large subunit methyltransferase H from Escherichia fergusonii (strain ATCC 35469 / DSM 13698 / CCUG 18766 / IAM 14443 / JCM 21226 / LMG 7866 / NBRC 102419 / NCTC 12128 / CDC 0568-73).